A 1041-amino-acid polypeptide reads, in one-letter code: Pre-mRNA-splicing factor ATP-dependent RNA helicase DHX16 (1041 aa).

Disordered stretches follow at residues 101–207 and 371–391; these read EDSE…AYEE and LQGDEEPSAPPTSTQAQQKES. Phosphoserine occurs at positions 103, 106, and 107. A compositionally biased stretch (basic residues) spans 119-130; that stretch reads QKKRKKRKHLRK. Ser160 carries the phosphoserine modification. Residues 166–207 are compositionally biased toward basic and acidic residues; it reads RTERERLQDLEERDAFAERVRQRDKDRTRNVLERSDKKAYEE. A compositionally biased stretch (polar residues) spans 381 to 391; it reads PTSTQAQQKES. The Helicase ATP-binding domain maps to 409–573; sequence LAAIANHQVL…FDDAPVFRIP (165 aa). Position 422-429 (422-429) interacts with ATP; the sequence is GETGSGKT. The DEAH box motif lies at 520–523; sequence DEAH. In terms of domain architecture, Helicase C-terminal spans 598–771; it reads SVLQIHVTQP…NVVLLLKSLG (174 aa). Thr712 carries the post-translational modification Phosphothreonine.

The protein belongs to the DEAD box helicase family. DEAH subfamily. DDX16/PRP8 sub-subfamily. As to quaternary structure, component of pre-catalytic spliceosome complexes. Component of the minor spliceosome, which splices U12-type introns. Interacts with GPKOW. Interacts with TRIM6. Interacts with RIGI. In terms of tissue distribution, expressed in the spleen, thyroid and testis. Also expressed in the brain and cerebellum.

The protein localises to the nucleus. The protein resides in the nucleoplasm. It is found in the cytoplasm. The enzyme catalyses ATP + H2O = ADP + phosphate + H(+). Functionally, required for pre-mRNA splicing as a component of the spliceosome. Contributes to pre-mRNA splicing after spliceosome formation and prior to the first transesterification reaction. As a component of the minor spliceosome, involved in the splicing of U12-type introns in pre-mRNAs. Also plays a role in innate antiviral response by acting as a pattern recognition receptor sensing splicing signals in viral RNA. Mechanistically, TRIM6 promotes the interaction between unanchored 'Lys-48'-polyubiquitin chains and DHX16, leading to DHX16 interaction with RIGI and ssRNA to amplify RIGI-dependent innate antiviral immune responses. The protein is Pre-mRNA-splicing factor ATP-dependent RNA helicase DHX16 (DHX16) of Homo sapiens (Human).